The following is a 436-amino-acid chain: UDP-glucuronate 4-epimerase 5 (436 aa).

2 helical membrane-spanning segments follow: residues L36 to P56 and G95 to L115. T97–F128 provides a ligand contact to NAD(+). The active-site Proton acceptor is Y247.

The protein belongs to the NAD(P)-dependent epimerase/dehydratase family. In terms of assembly, homodimer. As to expression, in leaves, pollen and siliques, but not in roots or flowers.

The protein localises to the golgi apparatus. Its subcellular location is the golgi stack membrane. The catalysed reaction is UDP-alpha-D-glucuronate = UDP-alpha-D-galacturonate. In terms of biological role, involved in the synthesis of the negatively charged monosaccharide that forms the backbone of pectic cell wall components. The chain is UDP-glucuronate 4-epimerase 5 (GAE5) from Arabidopsis thaliana (Mouse-ear cress).